A 79-amino-acid chain; its full sequence is Protein VdcD (79 aa).

Involved in the non-oxidative decarboxylation and detoxification of phenolic derivatives under both aerobic and anaerobic conditions, however the precise biochemical function of VdcD in metabolism of phenolic acid is unknown. The protein is Protein VdcD of Streptomyces sp. (strain D7).